The sequence spans 543 residues: Chaperonin GroEL (543 aa).

ATP is bound by residues 29-32 (TLGP), 86-90 (DGTTT), G413, 476-478 (NAA), and D492.

Belongs to the chaperonin (HSP60) family. As to quaternary structure, forms a cylinder of 14 subunits composed of two heptameric rings stacked back-to-back. Interacts with the co-chaperonin GroES.

Its subcellular location is the cytoplasm. The catalysed reaction is ATP + H2O + a folded polypeptide = ADP + phosphate + an unfolded polypeptide.. In terms of biological role, together with its co-chaperonin GroES, plays an essential role in assisting protein folding. The GroEL-GroES system forms a nano-cage that allows encapsulation of the non-native substrate proteins and provides a physical environment optimized to promote and accelerate protein folding. The chain is Chaperonin GroEL from Streptococcus pyogenes serotype M5 (strain Manfredo).